We begin with the raw amino-acid sequence, 305 residues long: tRNA pseudouridine synthase B (305 aa).

The active-site Nucleophile is Asp39.

The protein belongs to the pseudouridine synthase TruB family. Type 1 subfamily.

It carries out the reaction uridine(55) in tRNA = pseudouridine(55) in tRNA. Its function is as follows. Responsible for synthesis of pseudouridine from uracil-55 in the psi GC loop of transfer RNAs. The protein is tRNA pseudouridine synthase B of Staphylococcus aureus (strain MRSA252).